The primary structure comprises 137 residues: Cofilin (137 aa).

An ADF-H domain is found at 5-135 (GVKVSPECLE…AYETVLEKVT (131 aa)).

Belongs to the actin-binding proteins ADF family.

It is found in the cytoplasm. It localises to the cytoskeleton. The protein resides in the nucleus matrix. Its function is as follows. Controls reversibly actin polymerization and depolymerization in a pH-sensitive manner. It has the ability to bind G- and F-actin in a 1:1 ratio of cofilin to actin. Binding to F-actin is regulated by tropomyosin. It is the major component of intranuclear and cytoplasmic actin rods. Required for accumulation of actin at the cell division site via depolymerizing actin at the cell ends. In association with myosin II has a role in the assembly of the contractile ring via severing actin filaments. Involved in the maintenance of the contractile ring once formed. In association with profilin and capping protein, has a role in the mitotic reorganization of the actin cytoskeleton. Severs actin filaments (F-actin). The polypeptide is Cofilin (cof1) (Schizosaccharomyces pombe (strain 972 / ATCC 24843) (Fission yeast)).